The following is a 93-amino-acid chain: MKANIHPQFETVEVSCATCGKQHPIGTTVTSIKIETCSNCHPFYTGAQTFVVKAGPVDKFNKRYGITQDQKVKTVSSNADNQKETTEELIKNK.

The disordered stretch occupies residues 72-93 (VKTVSSNADNQKETTEELIKNK). Over residues 81–93 (NQKETTEELIKNK) the composition is skewed to basic and acidic residues.

This sequence belongs to the bacterial ribosomal protein bL31 family. Type A subfamily. Part of the 50S ribosomal subunit.

In terms of biological role, binds the 23S rRNA. This is Large ribosomal subunit protein bL31 from Onion yellows phytoplasma (strain OY-M).